The chain runs to 83 residues: Cytochrome b559 subunit alpha (83 aa).

A helical membrane pass occupies residues 21 to 35 (VIHSITIPSLFIAGW). His-23 contributes to the heme binding site.

It belongs to the PsbE/PsbF family. As to quaternary structure, heterodimer of an alpha subunit and a beta subunit. PSII is composed of 1 copy each of membrane proteins PsbA, PsbB, PsbC, PsbD, PsbE, PsbF, PsbH, PsbI, PsbJ, PsbK, PsbL, PsbM, PsbT, PsbX, PsbY, PsbZ, Psb30/Ycf12, at least 3 peripheral proteins of the oxygen-evolving complex and a large number of cofactors. It forms dimeric complexes. It depends on heme b as a cofactor.

The protein resides in the plastid. It localises to the chloroplast thylakoid membrane. This b-type cytochrome is tightly associated with the reaction center of photosystem II (PSII). PSII is a light-driven water:plastoquinone oxidoreductase that uses light energy to abstract electrons from H(2)O, generating O(2) and a proton gradient subsequently used for ATP formation. It consists of a core antenna complex that captures photons, and an electron transfer chain that converts photonic excitation into a charge separation. The polypeptide is Cytochrome b559 subunit alpha (Agrostis stolonifera (Creeping bentgrass)).